A 294-amino-acid polypeptide reads, in one-letter code: HTH-type transcriptional regulator XapR (294 aa).

The HTH lysR-type domain maps to 7–64 (TDLKLLRYFLAVAEELHFGRAAARLNMSQPPLSIHIKELENQLGTQLFIRHSRSVVLT). A DNA-binding region (H-T-H motif) is located at residues 24–43 (FGRAAARLNMSQPPLSIHIK).

The protein belongs to the LysR transcriptional regulatory family.

Its function is as follows. Positive regulator required for the expression of xapA and xapB. Binds to the inducer xanthosine. The chain is HTH-type transcriptional regulator XapR (xapR) from Escherichia coli (strain K12).